The following is a 614-amino-acid chain: Major facilitator superfamily domain-containing protein 6-like protein B (614 aa).

The next 2 helical transmembrane spans lie at 41-61 (LGLG…VHLL) and 78-98 (FFIM…AFYP). Polar residues predominate over residues 177-191 (HQRFTDQFPSSSPLT). Positions 177 to 243 (HQRFTDQFPS…PFATHPNVSH (67 aa)) are disordered. Residues 205–227 (GSGKAQKANSSKSSASNSKQRSS) show a composition bias toward low complexity. The next 9 membrane-spanning stretches (helical) occupy residues 270 to 290 (IFLI…PLEW), 312 to 332 (LWIW…FLID), 345 to 365 (VSFH…LSTL), 393 to 413 (IVLT…IQNF), 425 to 445 (ELYM…LYFF), 457 to 477 (WMVV…SFLW), 480 to 500 (WSVV…WWAI), 520 to 540 (LRWL…GFII), and 546 to 566 (AVLY…FLLV).

This sequence belongs to the major facilitator superfamily. MFSD6 family.

Its subcellular location is the membrane. The polypeptide is Major facilitator superfamily domain-containing protein 6-like protein B (mfsd6l-b) (Xenopus laevis (African clawed frog)).